The chain runs to 524 residues: GMP synthase [glutamine-hydrolyzing] (524 aa).

One can recognise a Glutamine amidotransferase type-1 domain in the interval 10–199 (PVLVVDFGAQ…LTEVAGLEQT (190 aa)). Cys87 serves as the catalytic Nucleophile. Catalysis depends on residues His173 and Glu175. Positions 200-398 (WTSANIAQQL…LGLPEEIVAR (199 aa)) constitute a GMPS ATP-PPase domain. Position 228–234 (228–234 (SGGVDSA)) interacts with ATP.

In terms of assembly, homodimer.

The catalysed reaction is XMP + L-glutamine + ATP + H2O = GMP + L-glutamate + AMP + diphosphate + 2 H(+). The protein operates within purine metabolism; GMP biosynthesis; GMP from XMP (L-Gln route): step 1/1. Catalyzes the synthesis of GMP from XMP. This chain is GMP synthase [glutamine-hydrolyzing] (guaA), found in Corynebacterium ammoniagenes (Brevibacterium ammoniagenes).